Reading from the N-terminus, the 276-residue chain is Hemin import ATP-binding protein HmuV (276 aa).

One can recognise an ABC transporter domain in the interval 2–259 (LTAHHLDVAR…AHIAQCYGFA (258 aa)). Residue 34–41 (GRNGAGKS) participates in ATP binding.

Belongs to the ABC transporter superfamily. Heme (hemin) importer (TC 3.A.1.14.5) family. In terms of assembly, the complex is composed of two ATP-binding proteins (HmuV), two transmembrane proteins (HmuU) and a solute-binding protein (HmuT).

The protein localises to the cell inner membrane. Functionally, part of the ABC transporter complex HmuTUV involved in hemin import. Responsible for energy coupling to the transport system. The chain is Hemin import ATP-binding protein HmuV from Burkholderia cenocepacia (strain HI2424).